The chain runs to 146 residues: Small ribosomal subunit protein uS15 (146 aa).

It belongs to the universal ribosomal protein uS15 family. In terms of assembly, part of the 30S ribosomal subunit.

In Picrophilus torridus (strain ATCC 700027 / DSM 9790 / JCM 10055 / NBRC 100828 / KAW 2/3), this protein is Small ribosomal subunit protein uS15.